Reading from the N-terminus, the 188-residue chain is MVPGAAGWCCLVLWLPACVAAHGFRIHDYLYFQVLSPGDIRYIFTATPAKDFGGIFHTRYEQIHLVPAEPPEACGELSNGFFIQDQIALVERGGCSFLSKTRVVQEHGGRAVIISDNAVDNDSFYVEMIQDSTQRTADIPALFLLGRDGYMIRRSLEQHGLPWAIISIPVNVTSIPTFELLQPPWTFW.

A signal peptide spans 1–21 (MVPGAAGWCCLVLWLPACVAA). The PA domain maps to 83–163 (IQDQIALVER…RSLEQHGLPW (81 aa)). Residue N171 is glycosylated (N-linked (GlcNAc...) asparagine).

In terms of processing, N-glycosylated; required for efficient secretion. Highly expressed in skeletal muscle, heart and liver. Expressed at intermediate level in kidney.

Its subcellular location is the secreted. Functionally, plays a role in the modulation of physical activity and adiposity. The polypeptide is Protease-associated domain-containing protein 1 (Homo sapiens (Human)).